Consider the following 441-residue polypeptide: Peroxisomal biogenesis factor 3 (441 aa).

Topologically, residues 1 to 17 (MAPNQRSRSLLQRHRGK) are peroxisomal. The helical transmembrane segment at 18 to 39 (VLISLTGIAALFTTGSVVVFFV) threads the bilayer. At 40–441 (KRWLYKQQLR…GVSSSFSFKP (402 aa)) the chain is on the cytoplasmic side.

Belongs to the peroxin-3 family. In terms of assembly, interacts with MSP1; leading to inhibit the translocase activity of MSP1.

The protein resides in the peroxisome membrane. Functionally, involved in peroxisome biosynthesis. Acts as a regulator of MSP1 by inhibiting the ability of MSP1 to unfold target proteins. The polypeptide is Peroxisomal biogenesis factor 3 (PEX3) (Saccharomyces cerevisiae (strain ATCC 204508 / S288c) (Baker's yeast)).